The following is a 239-amino-acid chain: Fatty acid metabolism regulator protein (239 aa).

Residues Gln6–Phe74 enclose the HTH gntR-type domain. A DNA-binding region (H-T-H motif) is located at residues Glu34–Gln53.

In terms of assembly, homodimer.

It localises to the cytoplasm. Its function is as follows. Multifunctional regulator of fatty acid metabolism. Represses transcription of at least eight genes required for fatty acid transport and beta-oxidation including fadA, fadB, fadD, fadL and fadE. Activates transcription of at least three genes required for unsaturated fatty acid biosynthesis: fabA, fabB and iclR, the gene encoding the transcriptional regulator of the aceBAK operon encoding the glyoxylate shunt enzymes. Binding of FadR is specifically inhibited by long chain fatty acyl-CoA compounds. The chain is Fatty acid metabolism regulator protein from Salmonella typhimurium (strain LT2 / SGSC1412 / ATCC 700720).